Reading from the N-terminus, the 440-residue chain is Histidinol dehydrogenase (440 aa).

NAD(+) contacts are provided by Tyr136, Gln197, and Asn220. Residues Ser243, Gln265, and His268 each contribute to the substrate site. Residues Gln265 and His268 each coordinate Zn(2+). Active-site proton acceptor residues include Glu333 and His334. His334, Asp367, Glu421, and His426 together coordinate substrate. Residue Asp367 participates in Zn(2+) binding. His426 is a binding site for Zn(2+).

Belongs to the histidinol dehydrogenase family. It depends on Zn(2+) as a cofactor.

It carries out the reaction L-histidinol + 2 NAD(+) + H2O = L-histidine + 2 NADH + 3 H(+). Its pathway is amino-acid biosynthesis; L-histidine biosynthesis; L-histidine from 5-phospho-alpha-D-ribose 1-diphosphate: step 9/9. Functionally, catalyzes the sequential NAD-dependent oxidations of L-histidinol to L-histidinaldehyde and then to L-histidine. This chain is Histidinol dehydrogenase, found in Pseudomonas aeruginosa (strain ATCC 15692 / DSM 22644 / CIP 104116 / JCM 14847 / LMG 12228 / 1C / PRS 101 / PAO1).